The primary structure comprises 115 residues: Holo-[acyl-carrier-protein] synthase (115 aa).

Aspartate 8 and glutamate 50 together coordinate Mg(2+).

The protein belongs to the P-Pant transferase superfamily. AcpS family. Mg(2+) serves as cofactor.

It is found in the cytoplasm. The catalysed reaction is apo-[ACP] + CoA = holo-[ACP] + adenosine 3',5'-bisphosphate + H(+). In terms of biological role, transfers the 4'-phosphopantetheine moiety from coenzyme A to a Ser of acyl-carrier-protein. The protein is Holo-[acyl-carrier-protein] synthase of Renibacterium salmoninarum (strain ATCC 33209 / DSM 20767 / JCM 11484 / NBRC 15589 / NCIMB 2235).